The chain runs to 289 residues: 4-hydroxy-tetrahydrodipicolinate synthase (289 aa).

Pyruvate is bound at residue T42. Y129 serves as the catalytic Proton donor/acceptor. K157 acts as the Schiff-base intermediate with substrate in catalysis. I198 is a binding site for pyruvate.

The protein belongs to the DapA family. In terms of assembly, homotetramer; dimer of dimers.

The protein resides in the cytoplasm. It carries out the reaction L-aspartate 4-semialdehyde + pyruvate = (2S,4S)-4-hydroxy-2,3,4,5-tetrahydrodipicolinate + H2O + H(+). The protein operates within amino-acid biosynthesis; L-lysine biosynthesis via DAP pathway; (S)-tetrahydrodipicolinate from L-aspartate: step 3/4. Functionally, catalyzes the condensation of (S)-aspartate-beta-semialdehyde [(S)-ASA] and pyruvate to 4-hydroxy-tetrahydrodipicolinate (HTPA). The protein is 4-hydroxy-tetrahydrodipicolinate synthase of Chlamydia caviae (strain ATCC VR-813 / DSM 19441 / 03DC25 / GPIC) (Chlamydophila caviae).